The sequence spans 1460 residues: Venom prothrombin activator pseutarin-C non-catalytic subunit (1460 aa).

A signal peptide spans 1 to 30 (MGRYSVSPVPKCLLLMFLGWSGLKYYQVNA). Positions 32 to 196 (QLREYHIAAQ…SGLIGALLIC (165 aa)) constitute a Plastocyanin-like 1 domain. 2 consecutive F5/8 type A domains span residues 32–330 (QLRE…LNIK) and 351–685 (KNWE…FLDA). Positions 124, 139, 142, and 143 each coordinate Ca(2+). N-linked (GlcNAc...) asparagine glycosylation occurs at Asn156. A disulfide bond links Cys170 and Cys196. N-linked (GlcNAc...) asparagine glycosylation is found at Asn204 and Asn242. 3 consecutive Plastocyanin-like domains span residues 206 to 330 (SQKF…LNIK), 351 to 529 (KNWE…LLVC), and 539 to 685 (VQNK…FLDA). Cys251 and Cys332 are oxidised to a cystine. N-linked (GlcNAc...) asparagine glycosylation is found at Asn406 and Asn471. Cysteines 503 and 529 form a disulfide. An N-linked (GlcNAc...) asparagine glycan is attached at Asn557. Disulfide bonds link Cys672/Cys1032, Cys966/Cys992, Cys1147/Cys1298, and Cys1303/Cys1457. A b region spans residues 693-818 (GNEEEEEDDG…PDDIAGRYLR (126 aa)). Residues 773 to 818 (SFKGSVAEEELKHTALALEEDAHASDPRIDSNSARNPDDIAGRYLR) constitute a propeptide, activation peptide (connecting region). 2 Plastocyanin-like domains span residues 824–992 (NKRR…ILIC) and 1001–1143 (NRTI…FTVI). Residues 824-1143 (NKRRYYIAAE…RGMQALFTVI (320 aa)) form the F5/8 type A 3 domain. Ca(2+) contacts are provided by Lys920, Phe935, Asp938, and Asp939. An N-linked (GlcNAc...) asparagine glycan is attached at Asn944. Residues Asn1001 and Asn1180 are each glycosylated (N-linked (GlcNAc...) asparagine). 2 consecutive F5/8 type C domains span residues 1147–1298 (CKLP…LLGC) and 1303–1457 (CSVP…LFGC).

This sequence belongs to the multicopper oxidase family. In terms of assembly, heterodimer of a light and a heavy chains; non-disulfide-linked. The interaction between the two chains is calcium-dependent. Found in its active form associated with pseutarin-C catalytic subunit (AC Q56VR3). In physiological conditions, blood coagulation factor V and factor Va are inactivated by activated protein C (APC) through proteolytic degradation of the heavy chain. However, pseutarin-C non-catalytic subunit (factor V-like protein) retains its full activity even at high concentration of APC. This has two explanations: this protein has only one of the three cleavage sites present in factor V that are targeted by the APC for inactivation, and the binding with the catalytic subunit protect the cleavage site from inactivation. Expressed by the venom gland.

The protein localises to the secreted. Its function is as follows. Snake prothrombin activator that attacks the hemostatic system of prey. This non-catalytic subunit is functionally similar to blood coagulation factor V. It serves as a critical cofactor for the prothrombinase activity of the catalytic subunit, which is similar to the blood coagulation factor X. The complex converts prothrombin to thrombin by sequential cleavage at two positions, Arg-320 followed by Arg-271. Cleavage at Arg-320 produces an active intermediate known as meizothrombin. Meizothrombin is the 'second' substrate for prothrombinase, and it docks in an altered manner to present the second cleavage site (271). Cleavage at Arg-271 releases active thrombin from its pro-fragment. This order of events is reversed if the protease component of prothrombinase is used on its own, suggesting that the 271 site is inherently more accessible to proteolysis. The complex converts prothrombin to thrombin in presence but also in the absence of membrane. The protein is Venom prothrombin activator pseutarin-C non-catalytic subunit of Pseudonaja textilis (Eastern brown snake).